The sequence spans 919 residues: Translation initiation factor IF-2 (919 aa).

The segment covering 93–107 has biased composition (basic and acidic residues); that stretch reads MGKALPEEVPEKIAP. 2 disordered regions span residues 93–145 and 158–279; these read MGKA…PAEP and KIQP…RKGE. The span at 136-145 shows a compositional bias: pro residues; it reads LAPPEKPAEP. Positions 158 to 171 are enriched in basic and acidic residues; the sequence is KIQPPEKFAEEPLK. Positions 172 to 193 are enriched in low complexity; the sequence is KPAVIEPEKAAAAPKAVPGEAK. 2 stretches are compositionally biased toward basic and acidic residues: residues 194-203 and 256-279; these read PLPRTERVQE and GAPKTEAEKPRKKIKLPDETRKGE. In terms of domain architecture, tr-type G spans 420–589; it reads PRAPVVTIMG…LLQADVLELK (170 aa). The interval 429–436 is G1; that stretch reads GHVDHGKT. 429 to 436 provides a ligand contact to GTP; that stretch reads GHVDHGKT. A G2 region spans residues 454–458; that stretch reads GITQA. The G3 stretch occupies residues 475-478; the sequence is DTPG. GTP contacts are provided by residues 475 to 479 and 529 to 532; these read DTPGH and NKID. Residues 529–532 form a G4 region; it reads NKID. A G5 region spans residues 565–567; the sequence is SAK.

The protein belongs to the TRAFAC class translation factor GTPase superfamily. Classic translation factor GTPase family. IF-2 subfamily.

The protein resides in the cytoplasm. In terms of biological role, one of the essential components for the initiation of protein synthesis. Protects formylmethionyl-tRNA from spontaneous hydrolysis and promotes its binding to the 30S ribosomal subunits. Also involved in the hydrolysis of GTP during the formation of the 70S ribosomal complex. This chain is Translation initiation factor IF-2, found in Syntrophus aciditrophicus (strain SB).